We begin with the raw amino-acid sequence, 270 residues long: NAD kinase (270 aa).

Asp-62 (proton acceptor) is an active-site residue. Residues 62 to 63, Arg-67, 129 to 130, Lys-140, Asp-159, Ile-167, 170 to 175, Ala-194, and Gln-227 contribute to the NAD(+) site; these read DG, ND, and TSYSFS.

This sequence belongs to the NAD kinase family. Requires a divalent metal cation as cofactor.

Its subcellular location is the cytoplasm. The catalysed reaction is NAD(+) + ATP = ADP + NADP(+) + H(+). Its function is as follows. Involved in the regulation of the intracellular balance of NAD and NADP, and is a key enzyme in the biosynthesis of NADP. Catalyzes specifically the phosphorylation on 2'-hydroxyl of the adenosine moiety of NAD to yield NADP. In Picrophilus torridus (strain ATCC 700027 / DSM 9790 / JCM 10055 / NBRC 100828 / KAW 2/3), this protein is NAD kinase.